The primary structure comprises 856 residues: Nuclear valosin-containing protein-like (856 aa).

The tract at residues 1-220 (MKPRPAGFVD…SLLESDMKRK (220 aa)) is interaction with RPL5. The short motif at 49 to 52 (RRKR) is the Nucleolar localization signal element. N6-acetyllysine is present on Lys70. Residues 84 to 175 (AKRARQGEED…AKDSEGGWFI (92 aa)) form a disordered region. Positions 85-88 (KRAR) match the Nuclear localization signal motif. A compositionally biased stretch (acidic residues) spans 92 to 111 (EDNEYTESYSDDDSSMEDYP). Composition is skewed to polar residues over residues 114 to 124 (QSANHMNSSLL) and 133 to 158 (DSVSNTPEMEQRETTSSTPRISSKTG). Ser134 is subject to Phosphoserine. Thr138 carries the phosphothreonine modification. At Lys156 the chain carries N6-acetyllysine. Position 191 is a phosphoserine (Ser191). Positions 197-236 (PKKPITEIQDSKDSSLLESDMKRKGKLKNKGSKRKKEDLQ) are disordered. Over residues 205 to 218 (QDSKDSSLLESDMK) the composition is skewed to basic and acidic residues. Lys208 participates in a covalent cross-link: Glycyl lysine isopeptide (Lys-Gly) (interchain with G-Cter in SUMO2). Ser211 and Ser215 each carry phosphoserine. Residues 218 to 232 (KRKGKLKNKGSKRKK) carry the Nuclear localization signal motif. Residues 219 to 230 (RKGKLKNKGSKR) are compositionally biased toward basic residues. The interaction with WDR74 stretch occupies residues 267-474 (VGGNDMTLKE…LTPGFVGADL (208 aa)). Residue 305 to 312 (GPPGCGKT) participates in ATP binding. The interval 496–523 (QQKKNPEMEDLPSKGVQEERLGTEPTSE) is disordered. 622 to 629 (GPPGCGKT) provides a ligand contact to ATP.

The protein belongs to the AAA ATPase family. As to quaternary structure, interacts with NCL/nucleolin. Isoform 1 and isoform 2 interact with TERT and isoform 1 exhibits a higher binding affinity for TERT compared to isoform 2. Isoform 1 interacts with MTREX in an ATP-dependent manner; the interaction is required to associate NVL with nuclear RNA exosome. Isoform 1 interacts with RPL5 in an ATP-dependent manner. Interacts with WDR74 (through WDR repeats); the interaction is independent of RNA or pre-60S ribosome particles. As to expression, widely expressed. Highest level of expression in heart, placenta, skeletal muscle, pancreas and retina.

The protein resides in the nucleus. It is found in the nucleoplasm. Its subcellular location is the nucleolus. Its function is as follows. Participates in the assembly of the telomerase holoenzyme and effecting of telomerase activity via its interaction with TERT. Involved in both early and late stages of the pre-rRNA processing pathways. Spatiotemporally regulates 60S ribosomal subunit biogenesis in the nucleolus. Catalyzes the release of specific assembly factors, such as WDR74, from pre-60S ribosomal particles through the ATPase activity. The chain is Nuclear valosin-containing protein-like from Homo sapiens (Human).